Consider the following 361-residue polypeptide: Tyrosine--tRNA ligase (361 aa).

Residues Y36, Y162, Q166, D169, and Q184 each coordinate L-tyrosine. The 'KMSKS' region motif lies at 236–240 (KMSKS). K239 contributes to the ATP binding site.

Belongs to the class-I aminoacyl-tRNA synthetase family. TyrS type 4 subfamily. As to quaternary structure, homodimer.

It localises to the cytoplasm. The catalysed reaction is tRNA(Tyr) + L-tyrosine + ATP = L-tyrosyl-tRNA(Tyr) + AMP + diphosphate + H(+). Functionally, catalyzes the attachment of tyrosine to tRNA(Tyr) in a two-step reaction: tyrosine is first activated by ATP to form Tyr-AMP and then transferred to the acceptor end of tRNA(Tyr). The sequence is that of Tyrosine--tRNA ligase from Saccharolobus islandicus (strain M.14.25 / Kamchatka #1) (Sulfolobus islandicus).